The primary structure comprises 569 residues: Protein angel homolog 2 (569 aa).

Disordered regions lie at residues 1–22 (MRKGRHMPRHTNANYARPGVSP), 63–92 (LQHPSSSFSTVRHPFNRPPRPPDPYQWSSW), and 109–155 (GLME…WLRN). Polar residues predominate over residues 63-72 (LQHPSSSFST). Low complexity predominate over residues 139–150 (PPKGSRSPKGSP).

Belongs to the CCR4/nocturin family.

The sequence is that of Protein angel homolog 2 (angel2) from Danio rerio (Zebrafish).